The primary structure comprises 437 residues: CCA-adding enzyme (437 aa).

2 residues coordinate ATP: Ser-47 and Arg-50. Positions 47 and 50 each coordinate CTP. Residues Glu-59, Asp-61, and Asp-110 each contribute to the Mg(2+) site. Positions 133, 152, and 161 each coordinate ATP. 3 residues coordinate CTP: His-133, Lys-152, and Tyr-161.

Belongs to the tRNA nucleotidyltransferase/poly(A) polymerase family. Archaeal CCA-adding enzyme subfamily. Homodimer. Mg(2+) serves as cofactor.

It carries out the reaction a tRNA precursor + 2 CTP + ATP = a tRNA with a 3' CCA end + 3 diphosphate. It catalyses the reaction a tRNA with a 3' CCA end + 2 CTP + ATP = a tRNA with a 3' CCACCA end + 3 diphosphate. Catalyzes the addition and repair of the essential 3'-terminal CCA sequence in tRNAs without using a nucleic acid template. Adds these three nucleotides in the order of C, C, and A to the tRNA nucleotide-73, using CTP and ATP as substrates and producing inorganic pyrophosphate. tRNA 3'-terminal CCA addition is required both for tRNA processing and repair. Also involved in tRNA surveillance by mediating tandem CCA addition to generate a CCACCA at the 3' terminus of unstable tRNAs. While stable tRNAs receive only 3'-terminal CCA, unstable tRNAs are marked with CCACCA and rapidly degraded. The structural flexibility of RNA controls the choice between CCA versus CCACCA addition: following the first CCA addition cycle, nucleotide-binding to the active site triggers a clockwise screw motion, producing torque on the RNA. This ejects stable RNAs, whereas unstable RNAs are refolded while bound to the enzyme and subjected to a second CCA catalytic cycle. The sequence is that of CCA-adding enzyme from Archaeoglobus fulgidus (strain ATCC 49558 / DSM 4304 / JCM 9628 / NBRC 100126 / VC-16).